Consider the following 147-residue polypeptide: MSINILKTLGDGRRYMKTWPMVRQLGLYFPEYRVVRATQLAILVMPVLAVLASVSQLYTYGWAFLPQALTIALFFISLPLQGLLWLGWRARHPLPLSLFDWSNQLSAKLTAMGIHCQSLGAKACYLDMALILKIAFERLDASYWEEL.

Helical transmembrane passes span 40–60 (LAIL…LYTY) and 68–88 (ALTI…WLGW).

Belongs to the UPF0208 family.

It localises to the cell inner membrane. The sequence is that of UPF0208 membrane protein SO_2914 from Shewanella oneidensis (strain ATCC 700550 / JCM 31522 / CIP 106686 / LMG 19005 / NCIMB 14063 / MR-1).